A 238-amino-acid polypeptide reads, in one-letter code: MIINAKGPASFAEKYIVRSIWENKFPPGSILPAERELSELIGVTRTTLREVLQRLARDGWLKIQHGKPTRVNNFWETSGLNILETIADLNPEGFPVLVDQLLSARTNVSAIYFRGALRYNPETAVDVLAKIHQLENTAESFAEYDYLLHHTLAFSSGNPLYVLILNGFKGLYSRVGRYYFSSAEARLLALNFYKELEVLAKAKNYTDVPALMRTYGINSGKMWLQLRDDMPASIAQDN.

The HTH gntR-type domain maps to K6–F74. The H-T-H motif DNA-binding region spans E34–Q53.

Homodimer.

Its subcellular location is the cytoplasm. Its function is as follows. Multifunctional regulator of fatty acid metabolism. The polypeptide is Fatty acid metabolism regulator protein (Shewanella putrefaciens (strain CN-32 / ATCC BAA-453)).